The sequence spans 140 residues: Protein SNA4 (140 aa).

At 1–8 (MCCYCVCC) the chain is on the cytoplasmic side. Residues cysteine 2, cysteine 3, cysteine 5, cysteine 7, and cysteine 8 are each lipidated (S-palmitoyl cysteine). Residues 9-29 (TVSDFILYIVAFFFPPAAVLL) traverse the membrane as a helical segment. The Vacuolar segment spans residues 30 to 41 (RSGPCSSDFLLN). Residues 42-62 (VLLTLLGFLPGMLHAFYYITI) form a helical membrane-spanning segment. Topologically, residues 63–140 (TSPLRNAEYV…LVESPPPYVP (78 aa)) are cytoplasmic. The segment at 84 to 140 (RNVPSNRPQNSQTPQNRPQQGSSARNVYPSVETPLLQGAAPHDNKQSLVESPPPYVP) is disordered. Positions 85–108 (NVPSNRPQNSQTPQNRPQQGSSAR) are enriched in polar residues. A Glycyl lysine isopeptide (Lys-Gly) (interchain with G-Cter in ubiquitin) cross-link involves residue lysine 128. Serine 134 bears the Phosphoserine mark.

This sequence belongs to the UPF0057 (PMP3) family.

The protein localises to the vacuole membrane. This chain is Protein SNA4 (SNA4), found in Saccharomyces cerevisiae (strain ATCC 204508 / S288c) (Baker's yeast).